The primary structure comprises 102 residues: Small ribosomal subunit protein uS17 (102 aa).

Residues 1 to 15 are compositionally biased toward polar residues; that stretch reads MTDETASQEASQSTD. The segment at 1–20 is disordered; it reads MTDETASQEASQSTDAAAPA.

The protein belongs to the universal ribosomal protein uS17 family. As to quaternary structure, part of the 30S ribosomal subunit.

In terms of biological role, one of the primary rRNA binding proteins, it binds specifically to the 5'-end of 16S ribosomal RNA. This chain is Small ribosomal subunit protein uS17, found in Frankia casuarinae (strain DSM 45818 / CECT 9043 / HFP020203 / CcI3).